The primary structure comprises 593 residues: CTD kinase subunit alpha (593 aa).

2 stretches are compositionally biased toward polar residues: residues 1–17 (MSYSKSTIYRRQGTEPN) and 29–51 (QLSGTNEESLGGHTLSSNAFKNN). The tract at residues 1–262 (MSYSKSTIYR…ESVPAPLPSP (262 aa)) is disordered. 2 positions are modified to phosphoserine: serine 56 and serine 58. Residues 90-103 (RSRKSRRRKGKKAF) show a composition bias toward basic residues. A phosphoserine mark is found at serine 104 and serine 109. The segment covering 139 to 152 (SSSSASVSPISPSA) has biased composition (low complexity). Polar residues predominate over residues 160–170 (QASSFRRSPPS). Over residues 198 to 215 (IPHETTSSDTQKKSSVSS) the composition is skewed to low complexity. The Protein kinase domain maps to 277–561 (YEKIDQIGEG…AHETLMHEYF (285 aa)). ATP-binding positions include 283 to 291 (IGEGTYGKV) and lysine 306. The Proton acceptor role is filled by aspartate 399.

Belongs to the protein kinase superfamily. CMGC Ser/Thr protein kinase family. CDC2/CDKX subfamily. In terms of assembly, CTDK-I consists of three subunits, ctk1/lsk1, ctk2/lsc1 and ctk3 (also called alpha, beta and gamma). Interacts with ctk2/lsc1. This interaction is dependent on kinase activity.

The protein resides in the nucleus. It localises to the nucleolus. It carries out the reaction [DNA-directed RNA polymerase] + ATP = phospho-[DNA-directed RNA polymerase] + ADP + H(+). Functionally, catalytic subunit of the CTDK-I complex, which hyperphosphorylates the C-terminal heptapeptide repeat domain (CTD) of the largest RNA polymerase II subunit. Involved in RNA polymerase II transcriptional elongation and pre-mRNA 3'-end processing. Together with ctk2/lsc1, required for the regulation of cytokinesis by phosphorylating 'Ser-2' residues found in the heptad repeats of the CTD. Required for nuclear localization of ctk2/lsc1. Positively regulates the septation initiation network (SIN) and promotes successful completion of cytokinesis in response to perturbation of the actomyosin ring. Acts in parallel to clp1 to promote actomyosin ring stability upon cytokinesis checkpoint activation. The protein is CTD kinase subunit alpha of Schizosaccharomyces pombe (strain 972 / ATCC 24843) (Fission yeast).